Consider the following 398-residue polypeptide: Cell adhesion molecule 3 (398 aa).

The signal sequence occupies residues 1–24 (MGAPAASLLLLLLLFACCWAPGGA). One can recognise an Ig-like V-type domain in the interval 25–126 (NLSQDDSQPW…VRTAKSLVTV (102 aa)). Topologically, residues 25–330 (NLSQDDSQPW…PVPSSSSTYH (306 aa)) are extracellular. Cystine bridges form between C50–C110, C152–C209, and C254–C299. Ig-like C2-type domains lie at 130–228 (PQKP…QRIE) and 233–315 (PTAM…YTLN). Residue N290 is glycosylated (N-linked (GlcNAc...) asparagine). The helical transmembrane segment at 331 to 351 (AIIGGIVAFIVFLLLIMLIFL) threads the bilayer. Topologically, residues 352–398 (GHYLIRHKGTYLTHEAKGSDDAPDADTAIINAEGGQSGGDDKKEYFI) are cytoplasmic. The disordered stretch occupies residues 367-398 (AKGSDDAPDADTAIINAEGGQSGGDDKKEYFI). Residue S388 is modified to Phosphoserine.

Belongs to the nectin family. Homodimer. Can form trans-heterodimers with NECTIN3. Interacts with EPB41L1, DLG3, PALS2 and CASK. Isoform 1 is expressed mainly in adult and fetal brain. Isoform 2 is highly expressed in adult brain and weakly expressed in placenta. In brain, Isoform 2 is highly expressed in cerebellum.

It is found in the cell membrane. Its subcellular location is the cell junction. In terms of biological role, involved in cell-cell adhesion. Has both calcium-independent homophilic cell-cell adhesion activity and calcium-independent heterophilic cell-cell adhesion activity with IGSF4, NECTIN1 and NECTIN3. Interaction with EPB41L1 may regulate structure or function of cell-cell junctions. The polypeptide is Cell adhesion molecule 3 (CADM3) (Homo sapiens (Human)).